An 87-amino-acid chain; its full sequence is Small ribosomal subunit protein bS20 (87 aa).

Residues 1–15 show a composition bias toward basic residues; sequence MANTRSAKKMVRKIA. Disordered regions lie at residues 1 to 22 and 64 to 87; these read MANT…DVNK and KGVT…KAMA.

The protein belongs to the bacterial ribosomal protein bS20 family.

Binds directly to 16S ribosomal RNA. The chain is Small ribosomal subunit protein bS20 from Hyphomonas neptunium (strain ATCC 15444).